We begin with the raw amino-acid sequence, 492 residues long: N-succinylglutamate 5-semialdehyde dehydrogenase (492 aa).

Position 220 to 225 (220 to 225 (GSANTG)) interacts with NAD(+). Residues Glu-243 and Cys-277 contribute to the active site.

It belongs to the aldehyde dehydrogenase family. AstD subfamily.

The catalysed reaction is N-succinyl-L-glutamate 5-semialdehyde + NAD(+) + H2O = N-succinyl-L-glutamate + NADH + 2 H(+). It participates in amino-acid degradation; L-arginine degradation via AST pathway; L-glutamate and succinate from L-arginine: step 4/5. Functionally, catalyzes the NAD-dependent reduction of succinylglutamate semialdehyde into succinylglutamate. The protein is N-succinylglutamate 5-semialdehyde dehydrogenase of Escherichia coli (strain K12 / MC4100 / BW2952).